The sequence spans 191 residues: Potassium-transporting ATPase KdpC subunit (191 aa).

A helical membrane pass occupies residues 6–26 (PAILLFILLTLVTGGLYPLLT).

The protein belongs to the KdpC family. The system is composed of three essential subunits: KdpA, KdpB and KdpC.

The protein resides in the cell inner membrane. Part of the high-affinity ATP-driven potassium transport (or Kdp) system, which catalyzes the hydrolysis of ATP coupled with the electrogenic transport of potassium into the cytoplasm. This subunit acts as a catalytic chaperone that increases the ATP-binding affinity of the ATP-hydrolyzing subunit KdpB by the formation of a transient KdpB/KdpC/ATP ternary complex. The chain is Potassium-transporting ATPase KdpC subunit from Enterobacter sp. (strain 638).